The chain runs to 249 residues: 5'-nucleotidase SurE (249 aa).

Asp-8, Asp-9, Ser-39, and Asn-91 together coordinate a divalent metal cation.

This sequence belongs to the SurE nucleotidase family. The cofactor is a divalent metal cation.

The protein resides in the cytoplasm. The catalysed reaction is a ribonucleoside 5'-phosphate + H2O = a ribonucleoside + phosphate. In terms of biological role, nucleotidase that shows phosphatase activity on nucleoside 5'-monophosphates. The protein is 5'-nucleotidase SurE of Magnetococcus marinus (strain ATCC BAA-1437 / JCM 17883 / MC-1).